Consider the following 675-residue polypeptide: Glycerophosphocholine phosphodiesterase GPCPD1 (675 aa).

The 115-residue stretch at Met1–Ile115 folds into the CBM20 domain. Residues Arg70 and His88–Lys89 contribute to the substrate site. 2 positions are modified to phosphoserine: Ser178 and Ser427. The GP-PDE domain maps to Pro321–Gln621. Residue Tyr611 is modified to Phosphotyrosine.

Belongs to the glycerophosphoryl diester phosphodiesterase family. Widely expressed with highest levels in skeletal muscle and heart.

It is found in the cytoplasm. Its subcellular location is the cytosol. It carries out the reaction sn-glycerol 3-phosphocholine + H2O = sn-glycerol 3-phosphate + choline + H(+). In terms of biological role, may be involved in the negative regulation of skeletal muscle differentiation, independently of its glycerophosphocholine phosphodiesterase activity. The polypeptide is Glycerophosphocholine phosphodiesterase GPCPD1 (Gpcpd1) (Mus musculus (Mouse)).